A 614-amino-acid polypeptide reads, in one-letter code: Subtilin transport ATP-binding protein SpaT (614 aa).

The next 5 helical transmembrane spans lie at 34–54 (FLKL…SLYI), 69–89 (VSIV…SELI), 147–167 (IIQA…SIAF), 175–195 (VSLL…KIGQ), and 267–287 (IAVQ…AFAG). The 287-residue stretch at 34–320 (FLKLIRFSII…IMTSIYSIYN (287 aa)) folds into the ABC transmembrane type-1 domain. The 241-residue stretch at 353 to 593 (VVFQNVSFIY…CPLYKKMDES (241 aa)) folds into the ABC transporter domain. Residue 387 to 394 (GPNGSGKK) coordinates ATP.

The protein belongs to the ABC transporter superfamily.

The protein localises to the cell membrane. Functionally, probably implicated in the export process of the lantibiotic subtilin. This is Subtilin transport ATP-binding protein SpaT (spaT) from Bacillus subtilis.